The chain runs to 354 residues: Glucose 1-dehydrogenase (354 aa).

Positions 1-27 are disordered; it reads MKVIGVTRDDDGPQLLERERPSPDPGE. Residues 7–22 show a composition bias toward basic and acidic residues; sequence TRDDDGPQLLERERPS. A Zn(2+)-binding site is contributed by Asp38. Thr40 provides a ligand contact to substrate. The Zn(2+) site is built by His63 and Glu64. Positions 91 to 110 are disordered; that stretch reads PNGETNEYFRRGEPDMAPDG. The substrate site is built by Glu114 and Glu150. Glu150 is a binding site for Zn(2+). Residues 181-184, 204-205, 269-271, and 298-300 each bind NADP(+); these read NGSL, RR, LGI, and TVN. Residue Asn300 participates in substrate binding.

The protein belongs to the zinc-containing alcohol dehydrogenase family. Glucose 1-dehydrogenase subfamily. Requires Zn(2+) as cofactor.

It catalyses the reaction D-glucose + NAD(+) = D-glucono-1,5-lactone + NADH + H(+). The catalysed reaction is D-glucose + NADP(+) = D-glucono-1,5-lactone + NADPH + H(+). Catalyzes the NAD(P)(+)-dependent oxidation of D-glucose to D-gluconate via gluconolactone. Can utilize both NAD(+) and NADP(+) as electron acceptor. Is involved in the degradation of glucose through a modified Entner-Doudoroff pathway. This is Glucose 1-dehydrogenase from Haloarcula marismortui (strain ATCC 43049 / DSM 3752 / JCM 8966 / VKM B-1809) (Halobacterium marismortui).